The following is a 193-amino-acid chain: Putative nitroreductase HBN1 (193 aa).

Ser-2 is subject to N-acetylserine.

The protein belongs to the nitroreductase family. FMN serves as cofactor.

Its subcellular location is the cytoplasm. The protein resides in the nucleus. This chain is Putative nitroreductase HBN1 (HBN1), found in Saccharomyces cerevisiae (strain ATCC 204508 / S288c) (Baker's yeast).